The following is a 214-amino-acid chain: Pyrrolidone-carboxylate peptidase (214 aa).

Residues glutamate 80, cysteine 143, and histidine 166 contribute to the active site.

Belongs to the peptidase C15 family. As to quaternary structure, homotetramer.

It localises to the cytoplasm. It catalyses the reaction Release of an N-terminal pyroglutamyl group from a polypeptide, the second amino acid generally not being Pro.. In terms of biological role, removes 5-oxoproline from various penultimate amino acid residues except L-proline. The polypeptide is Pyrrolidone-carboxylate peptidase (Escherichia fergusonii (strain ATCC 35469 / DSM 13698 / CCUG 18766 / IAM 14443 / JCM 21226 / LMG 7866 / NBRC 102419 / NCTC 12128 / CDC 0568-73)).